The chain runs to 450 residues: Signal recognition particle protein (450 aa).

Residues 106–113 (GLQGSGKT), 188–192 (DTAGR), and 246–249 (TKLD) each bind GTP.

This sequence belongs to the GTP-binding SRP family. SRP54 subfamily. In terms of assembly, part of the signal recognition particle protein translocation system, which is composed of SRP and FtsY.

The protein resides in the cytoplasm. The enzyme catalyses GTP + H2O = GDP + phosphate + H(+). In terms of biological role, involved in targeting and insertion of nascent membrane proteins into the cytoplasmic membrane. Binds to the hydrophobic signal sequence of the ribosome-nascent chain (RNC) as it emerges from the ribosomes. The SRP-RNC complex is then targeted to the cytoplasmic membrane where it interacts with the SRP receptor FtsY. The chain is Signal recognition particle protein from Mycoplasma pneumoniae (strain ATCC 29342 / M129 / Subtype 1) (Mycoplasmoides pneumoniae).